Here is a 308-residue protein sequence, read N- to C-terminus: Phenylcoumaran benzylic ether reductase 1 (308 aa).

NADP(+)-binding positions include glycine 11–glycine 17, arginine 36, and arginine 45. Lysine 133 serves as the catalytic Proton acceptor. Position 137 (arginine 137) interacts with NADP(+).

It belongs to the NmrA-type oxidoreductase family. Isoflavone reductase subfamily. Expressed in apical meristem and cotyledon veins of young seedlings. Expressed in vascular tissues of roots, leaves, stems and petals. Expressed in pollen grains. Expressed at low levels in cauline leaves and siliques.

The enzyme catalyses (-)-dehydrodiconiferyl alcohol + NADPH + H(+) = (S)-isodihydrodehydrodiconiferyl alcohol + NADP(+). It carries out the reaction (+)-dehydrodiconiferyl alcohol + NADPH + H(+) = (R)-isodihydrodehydrodiconiferyl alcohol + NADP(+). The catalysed reaction is (2R,3S)-dihydrodehydrodiconiferyl alcohol + NADPH + H(+) = (S)-tetrahydrodehydrodiconiferyl alcohol + NADP(+). It catalyses the reaction (2S,3R)-dihydrodehydrodiconiferyl alcohol + NADPH + H(+) = (R)-tetrahydrodehydrodiconiferyl alcohol + NADP(+). In terms of biological role, oxidoreductase involved in lignan biosynthesis. Catalyzes the NADPH-dependent reduction of phenylcoumaran benzylic ethers. Converts dehydrodiconiferyl alcohol (DDC) to isodihydrodehydrodiconiferyl alcohol (IDDDC), and dihydrodehydrodiconiferyl alcohol (DDDC) to tetrahydrodehydrodiconiferyl alcohol (TDDC). Plays an important role in the biosynthesis of secondary metabolites. In addition to the 8-5'-linked neolignan DDC, can reduce the 8-8'-linked lignans, pinoresinol, and lariciresinol, but with lower activities. The sequence is that of Phenylcoumaran benzylic ether reductase 1 from Arabidopsis thaliana (Mouse-ear cress).